Here is a 142-residue protein sequence, read N- to C-terminus: Acidic phospholipase A2 Bc-PL (142 aa).

The N-terminal stretch at 1-9 (AVCVSLLGA) is a signal peptide. The propeptide occupies 10–17 (ANIPPQPL). 7 disulfide bridges follow: cysteine 28-cysteine 94, cysteine 44-cysteine 141, cysteine 46-cysteine 62, cysteine 61-cysteine 122, cysteine 68-cysteine 115, cysteine 78-cysteine 108, and cysteine 101-cysteine 113. Ca(2+)-binding residues include tyrosine 45, glycine 47, and glycine 49. Residue histidine 65 is part of the active site. Ca(2+) is bound at residue aspartate 66. The active site involves aspartate 116.

It belongs to the phospholipase A2 family. Group I subfamily. D49 sub-subfamily. The cofactor is Ca(2+). In terms of tissue distribution, expressed by the venom gland.

It is found in the secreted. The enzyme catalyses a 1,2-diacyl-sn-glycero-3-phosphocholine + H2O = a 1-acyl-sn-glycero-3-phosphocholine + a fatty acid + H(+). In terms of biological role, PLA2 catalyzes the calcium-dependent hydrolysis of the 2-acyl groups in 3-sn-phosphoglycerides. The chain is Acidic phospholipase A2 Bc-PL from Bungarus candidus (Malayan krait).